Here is a 463-residue protein sequence, read N- to C-terminus: Nucleobindin-1 (463 aa).

The N-terminal stretch at 1–26 is a signal peptide; the sequence is MPPSGPQGTLLLLPLLLLLLLRAVLA. S86 carries the phosphoserine modification. Residue T148 is modified to Phosphothreonine. The stretch at 150–218 forms a coiled coil; it reads EARDLELLIQ…QQRRHREHPK (69 aa). Residues 172–218 mediate DNA binding; that stretch reads HHEEFKRYEMLKEHERRRYLESLGEEQRKEAERRLEEQQRRHREHPK. The span at 193-210 shows a compositional bias: basic and acidic residues; that stretch reads SLGEEQRKEAERRLEEQQ. The disordered stretch occupies residues 193-221; the sequence is SLGEEQRKEAERRLEEQQRRHREHPKVNV. Residues 228-321 are binds to GNAI2 and GNAI3; that stretch reads LKEVWEELDG…VTLGEFLAST (94 aa). 2 consecutive EF-hand domains span residues 240–275 and 292–327; these read PNRFNPKTFFILHDINSDGVLDEQELEALFTKELEK and ERLRMREHVMKNVDTNQDRLVTLGEFLASTQRKEFG. Residues D253, N255, D257, E264, D305, N307, D309, and E316 each contribute to the Ca(2+) site. A GBA motif is present at residues 303–333; sequence NVDTNQDRLVTLGEFLASTQRKEFGDTGEGW. Residues 341 to 409 are a coiled coil; sequence AYTEEELRRF…KQQQQQQQQQ (69 aa). Positions 368-463 are disordered; that stretch reads LSQETEALGR…LPEVEVPQHL (96 aa). Phosphoserine is present on S369. Basic and acidic residues predominate over residues 439–463; the sequence is DQKEVDTSEKKLLERLPEVEVPQHL.

The protein belongs to the nucleobindin family. In terms of assembly, interacts (via GBA motif) with guanine nucleotide-binding protein G(i) alpha subunits GNAI1, GNAI2 and GNAI3 with higher affinity for GNAI1 and GNAI3 than for GNAI2. Preferentially interacts with inactive rather than active GNAI3. Interaction with GNAI3 is inhibited when NUCB1 binds calcium, probably due to a conformational change which renders the GBA motif inaccessible.

The protein resides in the golgi apparatus. It localises to the cis-Golgi network membrane. It is found in the cytoplasm. The protein localises to the secreted. Functionally, major calcium-binding protein of the Golgi which may have a role in calcium homeostasis. Acts as a non-receptor guanine nucleotide exchange factor which binds to and activates alpha subunits of guanine nucleotide-binding proteins (G proteins). This chain is Nucleobindin-1 (NUCB1), found in Pongo abelii (Sumatran orangutan).